The primary structure comprises 197 residues: Pinin homolog 1 (197 aa).

The disordered stretch occupies residues 30–73 (LDGKVNNEDSHMEIDQPEGSMEEDDHRQVKEKNTSENSVEQKRG). Composition is skewed to basic and acidic residues over residues 34-43 (VNNEDSHMEI) and 53-71 (DDHRQVKEKNTSENSVEQK).

Belongs to the pinin family.

The protein resides in the nucleus. It localises to the cytoplasm. Functionally, transcriptional activator that may participate in the regulation of mRNA splicing. This is Pinin homolog 1 (pnn1) from Schizosaccharomyces pombe (strain 972 / ATCC 24843) (Fission yeast).